A 361-amino-acid chain; its full sequence is tRNA/tmRNA (uracil-C(5))-methyltransferase (361 aa).

Gln-183, Tyr-211, Asn-216, Glu-232, and Asp-294 together coordinate S-adenosyl-L-methionine. Catalysis depends on Cys-319, which acts as the Nucleophile. The active-site Proton acceptor is the Glu-353.

This sequence belongs to the class I-like SAM-binding methyltransferase superfamily. RNA M5U methyltransferase family. TrmA subfamily.

It carries out the reaction uridine(54) in tRNA + S-adenosyl-L-methionine = 5-methyluridine(54) in tRNA + S-adenosyl-L-homocysteine + H(+). The catalysed reaction is uridine(341) in tmRNA + S-adenosyl-L-methionine = 5-methyluridine(341) in tmRNA + S-adenosyl-L-homocysteine + H(+). Dual-specificity methyltransferase that catalyzes the formation of 5-methyluridine at position 54 (m5U54) in all tRNAs, and that of position 341 (m5U341) in tmRNA (transfer-mRNA). This chain is tRNA/tmRNA (uracil-C(5))-methyltransferase, found in Acinetobacter baumannii (strain ACICU).